We begin with the raw amino-acid sequence, 499 residues long: Basic immunoglobulin-like variable motif-containing protein (499 aa).

Disordered stretches follow at residues 1–29, 153–172, and 428–465; these read MPNI…RNNL, LKSR…ERKA, and GNLR…RSFS. A compositionally biased stretch (polar residues) spans 153-162; the sequence is LKSRSGVNKQ. The span at 444-453 shows a compositional bias: basic and acidic residues; sequence PKSESEDNVS.

The protein belongs to the BIVM family.

Its subcellular location is the cytoplasm. The protein localises to the nucleus. In Xenopus tropicalis (Western clawed frog), this protein is Basic immunoglobulin-like variable motif-containing protein (bivm).